Here is an 821-residue protein sequence, read N- to C-terminus: Zinc finger protein 41 (821 aa).

Residues 1-55 (MAANGDSPPWSPALAAEGRGSSCEVRRERTPEARIHSVKRYPDLSPGPKGRSSAD) are disordered. Residues 24–35 (EVRRERTPEARI) show a composition bias toward basic and acidic residues. Positions 69 to 140 (VSFEDVTVDF…EGEAPHQSCS (72 aa)) constitute a KRAB domain. Residue lysine 120 forms a Glycyl lysine isopeptide (Lys-Gly) (interchain with G-Cter in SUMO2) linkage. Residues 313-335 (YVCTECVMGFTQKSHLFEHQRIH) form a C2H2-type 1 zinc finger. The segment at 341–364 (RECDKSNKVFPQKPQVDVHPSVYT) adopts a C2H2-type 2; degenerate zinc-finger fold. 10 consecutive C2H2-type zinc fingers follow at residues 369–391 (YLCTQCGKVFTLKSNLITHQKIH), 397–419 (YKCSECGKAFFQRSDLFRHLRIH), 425–447 (YECSECGKGFSQNSDLSIHQKTH), 453–475 (YECNECGKAFTRKSALRMHQRIH), 481–503 (YVCADCGKAFIQKSHFNTHQRIH), 509–531 (YECSDCGKSFTKKSQLHVHQRIH), 537–559 (YICTECGKVFTHRTNLTTHQKTH), 565–587 (YMCAECGKAFTDQSNLIKHQKTH), 593–615 (YKCNGCGKAFIWKSRLKIHQKSH), and 621–643 (YECKDCGKAFIQKSTLSVHQRIH). Lysine 647 is covalently cross-linked (Glycyl lysine isopeptide (Lys-Gly) (interchain with G-Cter in SUMO2)). 6 C2H2-type zinc fingers span residues 649–671 (YVCPECGKAFIQKSHFIAHHRIH), 677–699 (YECSDCGKCFTKKSQLRVHQKIH), 705–727 (NICAECGKAFTDRSNLITHQKIH), 733–755 (YECGDCGKTFTWKSRLNIHQKSH), 761–783 (YECSKCGKAFIQKATLSMHQIIH), and 789–811 (YACTECQKAFTDRSNLIKHQKMH).

This sequence belongs to the krueppel C2H2-type zinc-finger protein family. In terms of tissue distribution, expressed in the heart, brain, placenta, lung, liver, skeletal muscle, kidney and pancreas.

It localises to the nucleus. Functionally, may be involved in transcriptional regulation. This is Zinc finger protein 41 (ZNF41) from Homo sapiens (Human).